A 474-amino-acid chain; its full sequence is Cysteine--tRNA ligase (474 aa).

Cysteine 28 lines the Zn(2+) pocket. A 'HIGH' region motif is present at residues 30 to 40 (ITVYDLCHLGH). Residues cysteine 209, histidine 234, and glutamate 238 each coordinate Zn(2+). Positions 269 to 273 (KMSKS) match the 'KMSKS' region motif. Lysine 272 is a binding site for ATP.

This sequence belongs to the class-I aminoacyl-tRNA synthetase family. Monomer. The cofactor is Zn(2+).

It is found in the cytoplasm. It carries out the reaction tRNA(Cys) + L-cysteine + ATP = L-cysteinyl-tRNA(Cys) + AMP + diphosphate. In Blochmanniella floridana, this protein is Cysteine--tRNA ligase.